Here is a 199-residue protein sequence, read N- to C-terminus: Peptidyl-tRNA hydrolase (199 aa).

Tyrosine 15 serves as a coordination point for tRNA. Histidine 20 (proton acceptor) is an active-site residue. 3 residues coordinate tRNA: phenylalanine 66, asparagine 68, and asparagine 114.

The protein belongs to the PTH family. As to quaternary structure, monomer.

It is found in the cytoplasm. The enzyme catalyses an N-acyl-L-alpha-aminoacyl-tRNA + H2O = an N-acyl-L-amino acid + a tRNA + H(+). Functionally, hydrolyzes ribosome-free peptidyl-tRNAs (with 1 or more amino acids incorporated), which drop off the ribosome during protein synthesis, or as a result of ribosome stalling. Its function is as follows. Catalyzes the release of premature peptidyl moieties from peptidyl-tRNA molecules trapped in stalled 50S ribosomal subunits, and thus maintains levels of free tRNAs and 50S ribosomes. The protein is Peptidyl-tRNA hydrolase of Cupriavidus pinatubonensis (strain JMP 134 / LMG 1197) (Cupriavidus necator (strain JMP 134)).